The following is a 537-amino-acid chain: MEVRVRYAPSPTGLQHIGGIRTALFNFLFARAHAGVFVLRVEDTDRSRCTAAFEQNLYDTLRWLGVSWDEGGGCPETAVKQGARGDGRSVAHAGGAYGPYTQSARTDLYRAQVARLVETGQAYYCFCDASRLERVRKIRTLNRMPPGYDRHCRELLPEEVRECLASGVPHVIRFKVPLEGSTHFRDALLGDIEWQNEEINPDPILLKSDGFPTYHLANVVDDHAMRITHVLRAQEWVPSTPLHLLLYRAFGWQPPLFCHLPMVMGADGHKLSKRHGATSCDEFRNAGYLPEALLNYVAMLGCSYGEGQDLFTREQLCAHFSLSRLNKSPAVFDYKKLAWFNGQYIRAKSDEQLCALVWPFIANAGVCGHIPADVEAGAVRTRRFADEAPCAPTEAQRSMLMRVIPLIKERLRFLTDAPELVRCFFQEPSLPEQGVFVPKRLDVAQVRAVLVRARGLVHEIVSASEPDVEVLLRAEAEKFGIKLGDFLMPIRVALTGATVSAPLVGTIRILGASRSCARIEHVIRERFSDDSQGVGGG.

Residues 9–19 (PSPTGLQHIGG) carry the 'HIGH' region motif. The Zn(2+) site is built by Cys-125, Cys-127, Cys-152, and Glu-154. The 'KMSKS' region signature appears at 270–274 (KLSKR). Residue Lys-273 participates in ATP binding.

It belongs to the class-I aminoacyl-tRNA synthetase family. Glutamate--tRNA ligase type 1 subfamily. In terms of assembly, monomer. Zn(2+) serves as cofactor.

The protein localises to the cytoplasm. It carries out the reaction tRNA(Glu) + L-glutamate + ATP = L-glutamyl-tRNA(Glu) + AMP + diphosphate. In terms of biological role, catalyzes the attachment of glutamate to tRNA(Glu) in a two-step reaction: glutamate is first activated by ATP to form Glu-AMP and then transferred to the acceptor end of tRNA(Glu). This is Glutamate--tRNA ligase from Treponema pallidum (strain Nichols).